The following is a 516-amino-acid chain: Alpha-(1-&gt;6)-mannopyranosyltransferase A (516 aa).

Position 2 is an N-acetylthreonine (threonine 2). Helical transmembrane passes span 38–58 (ARLG…AGSV), 78–98 (GLVL…LAWL), 112–132 (FTMR…VPVF), 174–194 (ITTA…TVIV), 198–218 (VVAG…LLVW), 232–252 (PTAL…MGGV), 278–298 (IILI…LPFL), 326–346 (LLIF…GLGW), 350–370 (LAGS…ANVI), 385–405 (LLRI…PLLW), 414–434 (AALT…PAAL), 454–474 (AIAA…PDGS), and 477–497 (MYSW…WYVL).

Belongs to the MptA/B family.

The protein localises to the membrane. Functionally, involved in the latter stages of the biosynthesis of the alpha-(1-&gt;6) mannan core of lipomannan (LM). Catalyzes the addition of alpha-(1-&gt;6)-mannose residue. In Mycobacterium tuberculosis (strain ATCC 25618 / H37Rv), this protein is Alpha-(1-&gt;6)-mannopyranosyltransferase A (mptA).